Reading from the N-terminus, the 278-residue chain is Protein Rv2133c (278 aa).

In Mycobacterium tuberculosis (strain ATCC 25618 / H37Rv), this protein is Protein Rv2133c.